Reading from the N-terminus, the 509-residue chain is Methylmalonyl-CoA decarboxylase subunit alpha (509 aa).

The CoA carboxyltransferase N-terminal domain occupies 4–260; the sequence is VQEKIELLHE…NNMEDAPLVD (257 aa). A CoA carboxyltransferase C-terminal domain is found at 267–503; sequence REDESLNSLL…SKRENRAPKK (237 aa).

It belongs to the AccD/PCCB family. The methylmalonyl-CoA decarboxylase is composed of five subunits: the carboxyltransferase alpha subunit (MmdA), the tunnel beta subunit (MmdB), the biotin-containing gamma subunit (MmdC), and the delta (MmdD) and epsilon (MmdE) subunits. Interacts with the gamma subunit.

The protein resides in the cell membrane. It carries out the reaction (S)-methylmalonyl-CoA + Na(+)(in) + H(+)(out) = propanoyl-CoA + Na(+)(out) + CO2. With respect to regulation, completely inhibited by avidin. Its function is as follows. Carboxyltransferase subunit of the sodium ion pump methylmalonyl-CoA decarboxylase, which converts the chemical energy of a decarboxylation reaction into an electrochemical gradient of Na(+) ions across the cytoplasmic membrane, thereby creating a sodium ion motive force that is used for ATP synthesis. The alpha subunit catalyzes the Na(+)-independent carboxyltransfer from methylmalonyl-CoA to the prosthetic biotin group located on the gamma subunit. Can also convert malonyl-CoA into acetyl-CoA. This chain is Methylmalonyl-CoA decarboxylase subunit alpha, found in Veillonella parvula (Staphylococcus parvulus).